Consider the following 251-residue polypeptide: MKNRDFEKAVVLIPARMASTRLPGKPLADIGGRPMIVQVALRAREAGAERIVVAVDDEQVFAAVQNAGFDVMMTRGDHQSGSDRIFEALQKADPYGKAEYVINVQGDLPTIEAETIRASLRPMENAAVDIATLTVEITDEEEKTNPNVVKVVGSPLSETRLRALYFTRTTAPYGDGPLYHHIGLYTYRRAALETFVRLPPSPLELRERLEQLRALEAGMRIDAEIVRSVPLGVDTPHDLEKARKILAGRTL.

The protein belongs to the KdsB family.

It is found in the cytoplasm. It catalyses the reaction 3-deoxy-alpha-D-manno-oct-2-ulosonate + CTP = CMP-3-deoxy-beta-D-manno-octulosonate + diphosphate. It functions in the pathway nucleotide-sugar biosynthesis; CMP-3-deoxy-D-manno-octulosonate biosynthesis; CMP-3-deoxy-D-manno-octulosonate from 3-deoxy-D-manno-octulosonate and CTP: step 1/1. Its pathway is bacterial outer membrane biogenesis; lipopolysaccharide biosynthesis. In terms of biological role, activates KDO (a required 8-carbon sugar) for incorporation into bacterial lipopolysaccharide in Gram-negative bacteria. This chain is 3-deoxy-manno-octulosonate cytidylyltransferase, found in Agrobacterium fabrum (strain C58 / ATCC 33970) (Agrobacterium tumefaciens (strain C58)).